The following is a 512-amino-acid chain: UDP-N-acetylmuramate--L-alanine ligase (512 aa).

An ATP-binding site is contributed by 132-138; it reads GAHGKTT.

It belongs to the MurCDEF family.

The protein resides in the cytoplasm. It carries out the reaction UDP-N-acetyl-alpha-D-muramate + L-alanine + ATP = UDP-N-acetyl-alpha-D-muramoyl-L-alanine + ADP + phosphate + H(+). The protein operates within cell wall biogenesis; peptidoglycan biosynthesis. Its function is as follows. Cell wall formation. This chain is UDP-N-acetylmuramate--L-alanine ligase, found in Bifidobacterium longum (strain DJO10A).